The sequence spans 311 residues: MVELEDLPSVGEKTAEKLRDAGFADMMRLATATPKELSVKAEIGEGVAEKVIEAARKSEKIDFETAYDVLERRRDVGHISVGSEGFNDLIGGGIETQSITEVFGEFGSGKSQISHELAVTVQLPPEKGGLDGECVFIDTENTFRPERIEQIANGFELDIDEVLQKIHVARAFNSSHQILMAEKINELIQQGNNIKLVIVDSLMAHFRAEYVGRESLAVRQQKLNQHLHALQQIANTYNVAVFITNQVQAKPDSFFGSPTKAIGGHVLGHASTYRIWLKKGLAGKRIARLVDSPHLPEGECVFKIKTEGIVD.

104–111 (GEFGSGKS) is an ATP binding site.

Belongs to the eukaryotic RecA-like protein family.

Its function is as follows. Involved in DNA repair and in homologous recombination. Binds and assemble on single-stranded DNA to form a nucleoprotein filament. Hydrolyzes ATP in a ssDNA-dependent manner and promotes DNA strand exchange between homologous DNA molecules. The sequence is that of DNA repair and recombination protein RadA from Methanobrevibacter smithii (strain ATCC 35061 / DSM 861 / OCM 144 / PS).